Here is a 182-residue protein sequence, read N- to C-terminus: Probable RNA 2'-phosphotransferase (182 aa).

The protein belongs to the KptA/TPT1 family.

Removes the 2'-phosphate from RNA via an intermediate in which the phosphate is ADP-ribosylated by NAD followed by a presumed transesterification to release the RNA and generate ADP-ribose 1''-2''-cyclic phosphate (APPR&gt;P). May function as an ADP-ribosylase. This is Probable RNA 2'-phosphotransferase from Acetivibrio thermocellus (strain ATCC 27405 / DSM 1237 / JCM 9322 / NBRC 103400 / NCIMB 10682 / NRRL B-4536 / VPI 7372) (Clostridium thermocellum).